Reading from the N-terminus, the 382-residue chain is Beta-1,4-galactosyltransferase 6 (382 aa).

Residues 1–15 (MSALKRMMRVSNRSL) are Cytoplasmic-facing. Residues 16 to 35 (IAFIFFFSLSTSCLYFIYVA) traverse the membrane as a helical; Signal-anchor for type II membrane protein segment. The Lumenal portion of the chain corresponds to 36–382 (PGIANTYLFM…MPELAPIEDY (347 aa)). Asparagine 71, asparagine 75, asparagine 83, asparagine 84, asparagine 99, and asparagine 122 each carry an N-linked (GlcNAc...) asparagine glycan. Cysteine 108 and cysteine 152 are disulfide-bonded. Residues 163 to 167 (PFRNR), 202 to 204 (FNR), 229 to 230 (VD), tyrosine 258, and tryptophan 290 contribute to the UDP-alpha-D-galactose site. Cysteine 223 and cysteine 242 are disulfide-bonded. Residue aspartate 230 coordinates Mn(2+). 292 to 295 (GEDD) contacts N-acetyl-D-glucosamine. A glycan (N-linked (GlcNAc...) asparagine) is linked at asparagine 307. Histidine 323 is a Mn(2+) binding site. 323-324 (HH) contacts UDP-alpha-D-galactose. Arginine 334 is an N-acetyl-D-glucosamine binding site. A glycan (N-linked (GlcNAc...) asparagine) is linked at asparagine 367.

The protein belongs to the glycosyltransferase 7 family. Mn(2+) serves as cofactor. The cofactor is Mg(2+). It depends on Ca(2+) as a cofactor. Brain and kidney.

It is found in the golgi apparatus. Its subcellular location is the golgi stack membrane. It carries out the reaction a beta-D-glucosyl-(1&lt;-&gt;1')-N-acylsphing-4-enine + UDP-alpha-D-galactose = a beta-D-Gal-(1-&gt;4)-beta-D-Glc-(1&lt;-&gt;1)-Cer(d18:1(4E)) + UDP + H(+). It participates in protein modification; protein glycosylation. Its pathway is sphingolipid metabolism. Its activity is regulated as follows. Inhibited by EDTA. Catalyzes the synthesis of lactosylceramide (LacCer) via the transfer of galactose from UDP-galactose to glucosylceramide (GlcCer). LacCer is the starting point in the biosynthesis of all gangliosides (membrane-bound glycosphingolipids) which play pivotal roles in the CNS including neuronal maturation and axonal and myelin formation. This chain is Beta-1,4-galactosyltransferase 6, found in Mus musculus (Mouse).